Here is a 304-residue protein sequence, read N- to C-terminus: Flagellin (304 aa).

This sequence belongs to the bacterial flagellin family. Interacts with FliW in a 1:1 complex. Forms a 3-way complex of Hag, FliS and FliW, in which Flis and FliW do not directly interact.

It is found in the secreted. It localises to the bacterial flagellum. Its subcellular location is the cell wall. Flagellin is the subunit which polymerizes to form the filaments of bacterial flagella. Assembly into flagella requires FliW. Acts as a homeostatic autoinhibitory regulator to control its own cytoplasmic levels. Partner switching by flagellin between FliW and CsrA provides a flagellar assembly checkpoint to tightly control the timing of flagellin synthesis. Flagellin binds to assembly factor FliW, freeing translation regulator CsrA to repress translation of the flagellin mRNA. When the flagellar hook is assembled flagellin is secreted, depleting intracellular flagellin, which frees FliW to interact with CsrA. This derepresses flagellin translation and provides protein for flagellar assembly. Once the flagellar filament is completed cytoplasmic flagellin levels rise and CsrA translation repression of flagellin reinitiates. In Bacillus subtilis (strain 168), this protein is Flagellin.